Here is a 161-residue protein sequence, read N- to C-terminus: SsrA-binding protein (161 aa).

The protein belongs to the SmpB family.

The protein localises to the cytoplasm. Functionally, required for rescue of stalled ribosomes mediated by trans-translation. Binds to transfer-messenger RNA (tmRNA), required for stable association of tmRNA with ribosomes. tmRNA and SmpB together mimic tRNA shape, replacing the anticodon stem-loop with SmpB. tmRNA is encoded by the ssrA gene; the 2 termini fold to resemble tRNA(Ala) and it encodes a 'tag peptide', a short internal open reading frame. During trans-translation Ala-aminoacylated tmRNA acts like a tRNA, entering the A-site of stalled ribosomes, displacing the stalled mRNA. The ribosome then switches to translate the ORF on the tmRNA; the nascent peptide is terminated with the 'tag peptide' encoded by the tmRNA and targeted for degradation. The ribosome is freed to recommence translation, which seems to be the essential function of trans-translation. This Mycolicibacterium smegmatis (strain ATCC 700084 / mc(2)155) (Mycobacterium smegmatis) protein is SsrA-binding protein.